We begin with the raw amino-acid sequence, 534 residues long: Ankyrin repeat and LEM domain-containing protein 1 (534 aa).

ANK repeat units follow at residues 4–35 (TACLALRLLAALREEEARAVEELLRLGADPNL), 39–71 (DGAAAVHLAARASHPRALHCLRMLLRWGADPNA), 75–104 (EGLTPVHVAAAWGCCGALELLLSRGGDPTL), and 108–137 (DGLRPLDWALQQRHHNCARVLQELDTPTQP). Residues 279 to 323 (HSSVPPMSDLQLLQALRALGYSPGPVTPFTRGHYLRRLQEAQASR) enclose the LEM domain. The GIY-YIG domain occupies 370–485 (KSSFTYLLLD…ALGLQTLTNQ (116 aa)). The short motif at 498–505 (PPSRRRRL) is the Nuclear localization signal element.

In terms of assembly, interacts (via LEM domain) with BANF1; the interaction may favor BANF1 dimerization. In terms of tissue distribution, predominantly expressed in bone marrow, spleen, thymus, colon and ovary. Expressed also to a lesser extent in lymph nodes, liver and testis.

The protein resides in the cytoplasm. Its subcellular location is the nucleus. Functionally, endonuclease that probably plays a role in the DNA damage response and DNA repair. The polypeptide is Ankyrin repeat and LEM domain-containing protein 1 (Mus musculus (Mouse)).